Reading from the N-terminus, the 206-residue chain is GTP cyclohydrolase 1 (206 aa).

Zn(2+)-binding residues include cysteine 95, histidine 98, and cysteine 166.

Belongs to the GTP cyclohydrolase I family. In terms of assembly, toroid-shaped homodecamer, composed of two pentamers of five dimers.

It carries out the reaction GTP + H2O = 7,8-dihydroneopterin 3'-triphosphate + formate + H(+). It participates in cofactor biosynthesis; 7,8-dihydroneopterin triphosphate biosynthesis; 7,8-dihydroneopterin triphosphate from GTP: step 1/1. The chain is GTP cyclohydrolase 1 from Bartonella quintana (strain Toulouse) (Rochalimaea quintana).